The sequence spans 90 residues: Probable Fe(2+)-trafficking protein (90 aa).

This sequence belongs to the Fe(2+)-trafficking protein family.

Its function is as follows. Could be a mediator in iron transactions between iron acquisition and iron-requiring processes, such as synthesis and/or repair of Fe-S clusters in biosynthetic enzymes. In Chromobacterium violaceum (strain ATCC 12472 / DSM 30191 / JCM 1249 / CCUG 213 / NBRC 12614 / NCIMB 9131 / NCTC 9757 / MK), this protein is Probable Fe(2+)-trafficking protein.